We begin with the raw amino-acid sequence, 259 residues long: Adenylosuccinate synthetase (259 aa).

Residues 3-9 and 31-33 each bind GTP; these read GDEGKGK and GHT. Catalysis depends on Asp4, which acts as the Proton acceptor. The Mg(2+) site is built by Asp4 and Gly31. 4–7 contributes to the IMP binding site; sequence DEGK. The active-site Proton donor is the His32. IMP-binding residues include Thr120, Arg134, Gln215, and Thr230.

It belongs to the adenylosuccinate synthetase family. As to quaternary structure, homodimer. The cofactor is Mg(2+).

Its subcellular location is the cytoplasm. The catalysed reaction is IMP + L-aspartate + GTP = N(6)-(1,2-dicarboxyethyl)-AMP + GDP + phosphate + 2 H(+). It participates in purine metabolism; AMP biosynthesis via de novo pathway; AMP from IMP: step 1/2. Functionally, plays an important role in the de novo pathway of purine nucleotide biosynthesis. Catalyzes the first committed step in the biosynthesis of AMP from IMP. This Aggregatibacter actinomycetemcomitans (Actinobacillus actinomycetemcomitans) protein is Adenylosuccinate synthetase.